We begin with the raw amino-acid sequence, 395 residues long: ATP phosphoribosyltransferase regulatory subunit (395 aa).

This sequence belongs to the class-II aminoacyl-tRNA synthetase family. HisZ subfamily. In terms of assembly, heteromultimer composed of HisG and HisZ subunits.

Its subcellular location is the cytoplasm. It functions in the pathway amino-acid biosynthesis; L-histidine biosynthesis; L-histidine from 5-phospho-alpha-D-ribose 1-diphosphate: step 1/9. In terms of biological role, required for the first step of histidine biosynthesis. May allow the feedback regulation of ATP phosphoribosyltransferase activity by histidine. The protein is ATP phosphoribosyltransferase regulatory subunit of Stutzerimonas stutzeri (Pseudomonas stutzeri).